A 130-amino-acid polypeptide reads, in one-letter code: Profilin-12 (130 aa).

An intrachain disulfide couples C13 to C115. Positions 81-97 (AVIRGKKGSGGITVKKT) match the Involved in PIP2 interaction motif. T111 is subject to Phosphothreonine.

Belongs to the profilin family. In terms of assembly, occurs in many kinds of cells as a complex with monomeric actin in a 1:1 ratio. Post-translationally, phosphorylated by MAP kinases.

The protein localises to the cytoplasm. The protein resides in the cytoskeleton. Binds to actin and affects the structure of the cytoskeleton. At high concentrations, profilin prevents the polymerization of actin, whereas it enhances it at low concentrations. The sequence is that of Profilin-12 from Zea mays (Maize).